We begin with the raw amino-acid sequence, 533 residues long: Glucose-6-phosphate isomerase (533 aa).

Glu-330 (proton donor) is an active-site residue. Active-site residues include His-359 and Lys-461.

It belongs to the GPI family.

Its subcellular location is the cytoplasm. It carries out the reaction alpha-D-glucose 6-phosphate = beta-D-fructose 6-phosphate. It functions in the pathway carbohydrate biosynthesis; gluconeogenesis. It participates in carbohydrate degradation; glycolysis; D-glyceraldehyde 3-phosphate and glycerone phosphate from D-glucose: step 2/4. In terms of biological role, catalyzes the reversible isomerization of glucose-6-phosphate to fructose-6-phosphate. The protein is Glucose-6-phosphate isomerase of Prochlorococcus marinus (strain SARG / CCMP1375 / SS120).